The chain runs to 187 residues: Elongation factor P (187 aa).

It belongs to the elongation factor P family.

It localises to the cytoplasm. Its pathway is protein biosynthesis; polypeptide chain elongation. Involved in peptide bond synthesis. Stimulates efficient translation and peptide-bond synthesis on native or reconstituted 70S ribosomes in vitro. Probably functions indirectly by altering the affinity of the ribosome for aminoacyl-tRNA, thus increasing their reactivity as acceptors for peptidyl transferase. The chain is Elongation factor P from Chelativorans sp. (strain BNC1).